Reading from the N-terminus, the 191-residue chain is Ribonuclease HII (191 aa).

In terms of domain architecture, RNase H type-2 spans 16-191; that stretch reads INLIGIDEAG…KLHRKSFKLL (176 aa). A divalent metal cation contacts are provided by D22, E23, and D110.

The protein belongs to the RNase HII family. Mn(2+) serves as cofactor. Requires Mg(2+) as cofactor.

The protein localises to the cytoplasm. The enzyme catalyses Endonucleolytic cleavage to 5'-phosphomonoester.. Functionally, endonuclease that specifically degrades the RNA of RNA-DNA hybrids. In Campylobacter jejuni subsp. jejuni serotype O:2 (strain ATCC 700819 / NCTC 11168), this protein is Ribonuclease HII (rnhB).